A 78-amino-acid polypeptide reads, in one-letter code: Large ribosomal subunit protein bL28B (78 aa).

The interval 1–29 is disordered; it reads MSAHCQVTGRKPGFGNTVSHSHRRSRRRW. Residues 20–29 are compositionally biased toward basic residues; the sequence is HSHRRSRRRW.

It belongs to the bacterial ribosomal protein bL28 family.

The chain is Large ribosomal subunit protein bL28B (rpmB2) from Mycobacterium bovis (strain ATCC BAA-935 / AF2122/97).